We begin with the raw amino-acid sequence, 250 residues long: 3-deoxy-manno-octulosonate cytidylyltransferase (250 aa).

This sequence belongs to the KdsB family.

It localises to the cytoplasm. The enzyme catalyses 3-deoxy-alpha-D-manno-oct-2-ulosonate + CTP = CMP-3-deoxy-beta-D-manno-octulosonate + diphosphate. The protein operates within nucleotide-sugar biosynthesis; CMP-3-deoxy-D-manno-octulosonate biosynthesis; CMP-3-deoxy-D-manno-octulosonate from 3-deoxy-D-manno-octulosonate and CTP: step 1/1. It functions in the pathway bacterial outer membrane biogenesis; lipopolysaccharide biosynthesis. Activates KDO (a required 8-carbon sugar) for incorporation into bacterial lipopolysaccharide in Gram-negative bacteria. The polypeptide is 3-deoxy-manno-octulosonate cytidylyltransferase (Francisella tularensis subsp. holarctica (strain FTNF002-00 / FTA)).